The primary structure comprises 417 residues: Serine hydroxymethyltransferase 3 (417 aa).

(6S)-5,6,7,8-tetrahydrofolate-binding positions include L121 and 125-127 (GHL). K229 is modified (N6-(pyridoxal phosphate)lysine). Position 354–356 (354–356 (SPF)) interacts with (6S)-5,6,7,8-tetrahydrofolate.

It belongs to the SHMT family. Homodimer. It depends on pyridoxal 5'-phosphate as a cofactor.

The protein resides in the cytoplasm. It catalyses the reaction (6R)-5,10-methylene-5,6,7,8-tetrahydrofolate + glycine + H2O = (6S)-5,6,7,8-tetrahydrofolate + L-serine. The protein operates within one-carbon metabolism; tetrahydrofolate interconversion. Its pathway is amino-acid biosynthesis; glycine biosynthesis; glycine from L-serine: step 1/1. In terms of biological role, catalyzes the reversible interconversion of serine and glycine with tetrahydrofolate (THF) serving as the one-carbon carrier. This reaction serves as the major source of one-carbon groups required for the biosynthesis of purines, thymidylate, methionine, and other important biomolecules. Also exhibits THF-independent aldolase activity toward beta-hydroxyamino acids, producing glycine and aldehydes, via a retro-aldol mechanism. The polypeptide is Serine hydroxymethyltransferase 3 (Pseudomonas aeruginosa (strain ATCC 15692 / DSM 22644 / CIP 104116 / JCM 14847 / LMG 12228 / 1C / PRS 101 / PAO1)).